We begin with the raw amino-acid sequence, 529 residues long: Peptide chain release factor 3 (529 aa).

The 270-residue stretch at 11–280 folds into the tr-type G domain; that stretch reads AARRTFAIIS…GLVAWAPPPM (270 aa). GTP contacts are provided by residues 20–27, 88–92, and 142–145; these read SHPDAGKT, DTPGH, and NKVD.

It belongs to the TRAFAC class translation factor GTPase superfamily. Classic translation factor GTPase family. PrfC subfamily.

The protein localises to the cytoplasm. In terms of biological role, increases the formation of ribosomal termination complexes and stimulates activities of RF-1 and RF-2. It binds guanine nucleotides and has strong preference for UGA stop codons. It may interact directly with the ribosome. The stimulation of RF-1 and RF-2 is significantly reduced by GTP and GDP, but not by GMP. This Sodalis glossinidius (strain morsitans) protein is Peptide chain release factor 3.